The sequence spans 541 residues: MHTLIKSVLEEILEAEVIIEHPKDREHGHYATPIAFNLAKIFKKSPLVIAEELALKISTHAKTQGFFDSVVACKGYINFTLSLDFLERFTQKALELKEKFGSKFKSENSQKIFLEFVSANPTGPLHIGHARGAVFGDSLAKIARFLGHEVLCEYYVNDMGSQIRLLGLSVWLAYREHVLKEGVTYPEVFYKGEYIIEIAKKAHNDLEPSLFKENEETIIEVLSSYAKDLMLLEIKDNLDSLGIHFDSYASEKEIFKHKDAVFKNLEKANALYEKDSKIWLKSSLYQDESDRVLVKEDKNYTYLAGDIVYHNEKFKQNYTKYINIWGADHHGYIARVKASLKFLGYDSNKLEVLLAQMVGLLKDNEPYKMSKRAGNFILIKDVVDDIGKDALRFIFLSKRLDTHLEFDVNTLKKQDSSNPIYYIHYANSRIHTMLEKSPFSKEEILQTPLKNLNAEEKYLLFSALSLPKIIEASFEEYGLQKMCEYAKTLASEFHRFYNAGKILDTPKTKELLKICLMVSLSLTNAFKLLGIEIKTKISAKD.

The 'HIGH' region signature appears at 119 to 129; sequence ANPTGPLHIGH.

The protein belongs to the class-I aminoacyl-tRNA synthetase family. Monomer.

Its subcellular location is the cytoplasm. It carries out the reaction tRNA(Arg) + L-arginine + ATP = L-arginyl-tRNA(Arg) + AMP + diphosphate. This Helicobacter acinonychis (strain Sheeba) protein is Arginine--tRNA ligase.